Reading from the N-terminus, the 382-residue chain is Mannitol-1-phosphate 5-dehydrogenase (382 aa).

An NAD(+)-binding site is contributed by 3–14 (ALHFGAGNIGRG). Residue Lys-269 is modified to N6-acetyllysine.

This sequence belongs to the mannitol dehydrogenase family. Monomer.

The enzyme catalyses D-mannitol 1-phosphate + NAD(+) = beta-D-fructose 6-phosphate + NADH + H(+). This chain is Mannitol-1-phosphate 5-dehydrogenase, found in Escherichia coli O157:H7.